A 982-amino-acid chain; its full sequence is Presequence protease, mitochondrial (982 aa).

A mitochondrion-targeting transit peptide spans 1–7; it reads MFQIRNY. Residue His84 coordinates Zn(2+). The Proton acceptor role is filled by Glu87. Zn(2+) is bound at residue His88. The active site involves Glu160. Glu185 lines the Zn(2+) pocket.

The protein belongs to the peptidase M16 family. PreP subfamily. As to quaternary structure, monomer and homodimer; homodimerization is induced by binding of the substrate. Zn(2+) serves as cofactor.

Its subcellular location is the mitochondrion intermembrane space. The protein localises to the mitochondrion matrix. In terms of biological role, degrades mitochondrial transit peptides after their cleavage in the intermembrane space or in the matrix, and presequence peptides; clearance of these peptides is required to keep the presequence processing machinery running. Preferentially cleaves the N-terminal side of paired basic amino acid residues. Also degrades other unstructured peptides. May function as an ATP-dependent peptidase as opposed to a metalloendopeptidase. This chain is Presequence protease, mitochondrial (CYM1), found in Kluyveromyces lactis (strain ATCC 8585 / CBS 2359 / DSM 70799 / NBRC 1267 / NRRL Y-1140 / WM37) (Yeast).